The sequence spans 401 residues: MSHIQIPPGLTELLQGYTVEVLRQRPPDLVDFAVDYFTRLREARSRASTPPAAPPSGSQDFDPGAGLVADAVADSESEDEEDLDVPIPGRFDRRVSVCAETYNPDEEEEDTDPRVIHPKTDQQRCRLQEACKDILLFKNLDPEQLSQVLDAMFERTVKVDEHVIDQGDDGDNFYVIERGTYDILVTKDNQTRSVGQYDNHGSFGELALMYNTPRAATIVATSEGSLWGLDRVTFRRIIVKNNAKKRKMFESFIESVPLLKSLEVSERMKIVDVIGEKVYKDGERIITQGEKADSFYIIESGEVSILIKSKTKVNKDGENQEVEIARCHKGQYFGELALVTNKPRAASAYAVGDVKCLVMDVQAFERLLGPCMDIMKRNISHYEEQLVKMFGSSMDLIDPGQ.

Ser-2 carries the post-translational modification N-acetylserine. The interval 2–135 (SHIQIPPGLT…RLQEACKDIL (134 aa)) is dimerization and phosphorylation. Residues 43-65 (ARSRASTPPAAPPSGSQDFDPGA) are disordered. The segment covering 46–58 (RASTPPAAPPSGS) has biased composition (low complexity). 3 positions are modified to phosphoserine: Ser-48, Ser-75, and Ser-77. Ser-96 carries the post-translational modification Phosphoserine; by PKA. Residues 136–257 (LFKN…ESVP), Glu-205, Arg-214, 258–401 (LLKS…DPGQ), Glu-335, and Arg-344 contribute to the 3',5'-cyclic AMP site. Thr-212 carries the post-translational modification Phosphothreonine; by PDPK1. Phosphoserine is present on residues Ser-347 and Ser-392.

It belongs to the cAMP-dependent kinase regulatory chain family. In terms of assembly, the inactive form of the enzyme is composed of two regulatory chains and two catalytic chains. Activation by cAMP produces two active catalytic monomers and a regulatory dimer that binds four cAMP molecules. Interacts with AKAP4 and CBFA2T3. Interacts with the phosphorylated form of PJA2. Interacts with MYRIP; this interaction may link PKA to components of the exocytosis machinery, thus facilitating exocytosis, including insulin release. Forms a complex composed of PRKAR2A, GSK3B and GSKIP through GSKIP interaction; facilitates PKA-induced phosphorylation and regulates GSK3B activity. Interacts with ADCY8; inhibits adenylate cyclase activity through PKA phosphorylation. A second phosphorylation site has not been located. Post-translationally, phosphorylation of Thr-212 by PDPK1 seems to attenuate the activity of PKA, perhaps by strengthening interaction between the regulatory and the catalytic subunits. As to expression, four types of regulatory chains are found: I-alpha, I-beta, II-alpha, and II-beta. Their expression varies among tissues and is in some cases constitutive and in others inducible.

It is found in the cytoplasm. It localises to the cell membrane. Regulatory subunit of the cAMP-dependent protein kinases involved in cAMP signaling in cells. Type II regulatory chains mediate membrane association by binding to anchoring proteins, including the MAP2 kinase. In Bos taurus (Bovine), this protein is cAMP-dependent protein kinase type II-alpha regulatory subunit (PRKAR2A).